The following is a 194-amino-acid chain: NADH-quinone oxidoreductase subunit B (194 aa).

A compositionally biased stretch (polar residues) spans 1–11; sequence MGMSQNNSTLV. The segment at 1–22 is disordered; sequence MGMSQNNSTLVAPQPKGIIDPA. Cys-72, Cys-73, Cys-138, and Cys-168 together coordinate [4Fe-4S] cluster.

Belongs to the complex I 20 kDa subunit family. NDH-1 is composed of 14 different subunits. Subunits NuoB, C, D, E, F, and G constitute the peripheral sector of the complex. The cofactor is [4Fe-4S] cluster.

The protein localises to the cell inner membrane. It carries out the reaction a quinone + NADH + 5 H(+)(in) = a quinol + NAD(+) + 4 H(+)(out). NDH-1 shuttles electrons from NADH, via FMN and iron-sulfur (Fe-S) centers, to quinones in the respiratory chain. The immediate electron acceptor for the enzyme in this species is believed to be ubiquinone. Couples the redox reaction to proton translocation (for every two electrons transferred, four hydrogen ions are translocated across the cytoplasmic membrane), and thus conserves the redox energy in a proton gradient. The chain is NADH-quinone oxidoreductase subunit B from Agrobacterium fabrum (strain C58 / ATCC 33970) (Agrobacterium tumefaciens (strain C58)).